The primary structure comprises 260 residues: Putative ABC transporter ATP-binding protein SCO3161 (260 aa).

The 231-residue stretch at 16 to 246 (LDVSGLAFAY…DDLMRAHRLE (231 aa)) folds into the ABC transporter domain. Position 49-56 (49-56 (GPNGAGKT)) interacts with ATP.

It belongs to the ABC transporter superfamily.

It is found in the cell membrane. Its function is as follows. Probably part of an ABC transporter complex. Responsible for energy coupling to the transport system. This chain is Putative ABC transporter ATP-binding protein SCO3161, found in Streptomyces coelicolor (strain ATCC BAA-471 / A3(2) / M145).